The following is a 73-amino-acid chain: Putative defensin-like protein 270 (73 aa).

Residues 1–23 (MMSSKSHFVALLLIIFLIVNVQS) form the signal peptide. Intrachain disulfides connect Cys-33-Cys-72, Cys-39-Cys-60, Cys-45-Cys-70, and Cys-49-Cys-71.

It belongs to the DEFL family.

The protein localises to the secreted. This is Putative defensin-like protein 270 from Arabidopsis thaliana (Mouse-ear cress).